The chain runs to 166 residues: Large ribosomal subunit protein uL10 (166 aa).

In terms of assembly, part of the ribosomal stalk of the 50S ribosomal subunit. The N-terminus interacts with L11 and 23S rRNA to form the base of the stalk. The C-terminus forms an elongated spine to which L12 dimers bind in a sequential fashion forming a pentameric L10(L12)2(L12)2 complex.

Functionally, forms part of the ribosomal stalk, playing a central role in the interaction of the ribosome with GTP-bound translation factors (such as IF-2, EF-Tu, EF-G and RF3). The polypeptide is Large ribosomal subunit protein uL10 (rplJ) (Bacillus subtilis (strain 168)).